A 493-amino-acid polypeptide reads, in one-letter code: Membrane-bound lytic murein transglycosylase F (493 aa).

An N-terminal signal peptide occupies residues 1–21; sequence MKRLRFNYLLIGLITVLLALA. Residues 22-268 form a non-LT domain region; it reads LWPSIPWYGG…RLDEKYLGHV (247 aa). The segment at 269–493 is LT domain; it reads GTFDYVDTRT…LNPVSALPLP (225 aa). Glu-313 is a catalytic residue.

In the N-terminal section; belongs to the bacterial solute-binding protein 3 family. This sequence in the C-terminal section; belongs to the transglycosylase Slt family.

It is found in the cell outer membrane. It catalyses the reaction Exolytic cleavage of the (1-&gt;4)-beta-glycosidic linkage between N-acetylmuramic acid (MurNAc) and N-acetylglucosamine (GlcNAc) residues in peptidoglycan, from either the reducing or the non-reducing ends of the peptidoglycan chains, with concomitant formation of a 1,6-anhydrobond in the MurNAc residue.. In terms of biological role, murein-degrading enzyme that degrades murein glycan strands and insoluble, high-molecular weight murein sacculi, with the concomitant formation of a 1,6-anhydromuramoyl product. Lytic transglycosylases (LTs) play an integral role in the metabolism of the peptidoglycan (PG) sacculus. Their lytic action creates space within the PG sacculus to allow for its expansion as well as for the insertion of various structures such as secretion systems and flagella. The chain is Membrane-bound lytic murein transglycosylase F from Erwinia tasmaniensis (strain DSM 17950 / CFBP 7177 / CIP 109463 / NCPPB 4357 / Et1/99).